The primary structure comprises 67 residues: Beta-defensin 36 (67 aa).

The first 22 residues, 1–22, serve as a signal peptide directing secretion; the sequence is MKLLLLTLAALLLVSQLTPGDA. 3 disulfide bridges follow: Cys-25-Cys-52, Cys-32-Cys-46, and Cys-36-Cys-53.

Belongs to the beta-defensin family.

Its subcellular location is the secreted. Functionally, has antibacterial activity. The chain is Beta-defensin 36 (Defb36) from Mus musculus (Mouse).